Reading from the N-terminus, the 271-residue chain is tRNA pseudouridine synthase A (271 aa).

Residue aspartate 56 is the Nucleophile of the active site. Tyrosine 120 provides a ligand contact to substrate.

Belongs to the tRNA pseudouridine synthase TruA family. As to quaternary structure, homodimer.

It catalyses the reaction uridine(38/39/40) in tRNA = pseudouridine(38/39/40) in tRNA. In terms of biological role, formation of pseudouridine at positions 38, 39 and 40 in the anticodon stem and loop of transfer RNAs. The protein is tRNA pseudouridine synthase A of Janthinobacterium sp. (strain Marseille) (Minibacterium massiliensis).